Consider the following 405-residue polypeptide: LanC-like protein GCL2 (405 aa).

3 residues coordinate Zn(2+): C278, C323, and H324.

This sequence belongs to the LanC-like protein family.

Functionally, may play a role in signaling. May be not involved in abscisic acid (ABA) signaling. In Arabidopsis thaliana (Mouse-ear cress), this protein is LanC-like protein GCL2 (GCL2).